The chain runs to 270 residues: Glucosamine-6-phosphate deaminase (270 aa).

Aspartate 72 functions as the Proton acceptor; for enolization step in the catalytic mechanism. The active-site For ring-opening step is the aspartate 141. Histidine 143 (proton acceptor; for ring-opening step) is an active-site residue. Glutamate 148 functions as the For ring-opening step in the catalytic mechanism.

The protein belongs to the glucosamine/galactosamine-6-phosphate isomerase family. NagB subfamily. Homohexamer.

The catalysed reaction is alpha-D-glucosamine 6-phosphate + H2O = beta-D-fructose 6-phosphate + NH4(+). Its pathway is amino-sugar metabolism; N-acetylneuraminate degradation; D-fructose 6-phosphate from N-acetylneuraminate: step 5/5. Its activity is regulated as follows. Allosterically activated by N-acetylglucosamine 6-phosphate (GlcNAc6P). Functionally, catalyzes the reversible isomerization-deamination of glucosamine 6-phosphate (GlcN6P) to form fructose 6-phosphate (Fru6P) and ammonium ion. In Photorhabdus laumondii subsp. laumondii (strain DSM 15139 / CIP 105565 / TT01) (Photorhabdus luminescens subsp. laumondii), this protein is Glucosamine-6-phosphate deaminase.